Consider the following 203-residue polypeptide: MLATLMFILAYLLGSISSAILVSRLFKLPDPRSNGSNNPGATNVYRLGGALPACLVLIFDVLKGTIPVWGAYFLDLEPLALGLVAVAACLGHMFPLFFGFKGGKAVATAFGSLLPIGLSLAGLLICTWFIMVAITRYSSLAALVAVSLAPLYTWLIKPLYTLPVTFITVLIIFRHRSNIARLFSGNEPKVGAKKAPTDEKSDI.

A run of 5 helical transmembrane segments spans residues 2 to 22, 54 to 74, 80 to 100, 114 to 134, and 153 to 173; these read LATLMFILAYLLGSISSAILV, CLVLIFDVLKGTIPVWGAYFL, ALGLVAVAACLGHMFPLFFGF, LPIGLSLAGLLICTWFIMVAI, and TWLIKPLYTLPVTFITVLIIF.

It belongs to the PlsY family. In terms of assembly, probably interacts with PlsX.

It localises to the cell inner membrane. It carries out the reaction an acyl phosphate + sn-glycerol 3-phosphate = a 1-acyl-sn-glycero-3-phosphate + phosphate. Its pathway is lipid metabolism; phospholipid metabolism. Functionally, catalyzes the transfer of an acyl group from acyl-phosphate (acyl-PO(4)) to glycerol-3-phosphate (G3P) to form lysophosphatidic acid (LPA). This enzyme utilizes acyl-phosphate as fatty acyl donor, but not acyl-CoA or acyl-ACP. The polypeptide is Glycerol-3-phosphate acyltransferase (Pseudoalteromonas translucida (strain TAC 125)).